A 120-amino-acid chain; its full sequence is Small ribosomal subunit protein uS11 (120 aa).

The protein belongs to the universal ribosomal protein uS11 family. Part of the 30S ribosomal subunit. Interacts with proteins S7 and S18. Binds to IF-3.

Functionally, located on the platform of the 30S subunit, it bridges several disparate RNA helices of the 16S rRNA. Forms part of the Shine-Dalgarno cleft in the 70S ribosome. This is Small ribosomal subunit protein uS11 from Neorickettsia sennetsu (strain ATCC VR-367 / Miyayama) (Ehrlichia sennetsu).